We begin with the raw amino-acid sequence, 75 residues long: Guanine nucleotide-binding protein G(I)/G(S)/G(O) subunit gamma-4 (75 aa).

Cysteine 72 carries the cysteine methyl ester modification. A lipid anchor (S-geranylgeranyl cysteine) is attached at cysteine 72. A propeptide spans 73–75 (TIL) (removed in mature form).

The protein belongs to the G protein gamma family. G proteins are composed of 3 units, alpha, beta and gamma. Interacts with beta-1 and beta-2, but not with beta-3. Interacts with KCNK1. Interacts (via C-terminus) with KCNK2/TREK-1 (via N-terminus); this interaction confers ion selectivity to Cl(-) and L-glutamate. Brain.

Its subcellular location is the cell membrane. Functionally, guanine nucleotide-binding proteins (G proteins) are involved as a modulator or transducer in various transmembrane signaling systems. The beta and gamma chains are required for the GTPase activity, for replacement of GDP by GTP, and for G protein-effector interaction. In Mus musculus (Mouse), this protein is Guanine nucleotide-binding protein G(I)/G(S)/G(O) subunit gamma-4 (Gng4).